The sequence spans 148 residues: uncharacterized protein (148 aa).

Low complexity predominate over residues 65 to 79; that stretch reads VDSTPSVDSTGSTSD. A disordered region spans residues 65–85; that stretch reads VDSTPSVDSTGSTSDVVDDRG.

This is an uncharacterized protein from Saccharomyces cerevisiae (strain ATCC 204508 / S288c) (Baker's yeast).